The chain runs to 632 residues: Basic helix-loop-helix ARNT-like protein 1 (632 aa).

A disordered region spans residues 1–39 (MADQRMDISSTISDFMSPGPTDLLSGSLGTSGVDCNRKR). S17 carries the phosphoserine; by GSK3-beta modification. Position 21 is a phosphothreonine; by GSK3-beta (T21). The short motif at 36-41 (NRKRKG) is the Nuclear localization signal element. Residues 79 to 132 (NAREAHSQIEKRRRDKMNSFIDELASLVPTCNAMSRKLDKLTVLRMAVQHMKTL) enclose the bHLH domain. Position 85 is a phosphoserine (S85). The residue at position 97 (S97) is a Phosphoserine; by CK2. Residues 149–159 (LSDDELKHLIL) carry the Nuclear export signal 1 motif. Residues 150 to 222 (SDDELKHLIL…EQLSSSDTAP (73 aa)) enclose the PAS 1 domain. K259 participates in a covalent cross-link: Glycyl lysine isopeptide (Lys-Gly) (interchain with G-Cter in SUMO2 and SUMO3). Residue K266 forms a Glycyl lysine isopeptide (Lys-Gly) (interchain with G-Cter in SUMO); alternate linkage. Residue K266 forms a Glycyl lysine isopeptide (Lys-Gly) (interchain with G-Cter in SUMO2); alternate linkage. The 71-residue stretch at 333-403 (QPANGEIRVK…CHRQVLQTRE (71 aa)) folds into the PAS 2 domain. Positions 367-375 (LAYLPQELL) match the Nuclear export signal 2 motif. Positions 408-451 (NCYKFKIKDGSFITLRSRWFSFMNPWTKEVEYIVSTNTVVLANV) constitute a PAC domain. 2 disordered regions span residues 465–498 (PPHSMDSMLPSGEGGPKRTHPTVPGIPGGTRAGA) and 517–601 (GSSP…SPSN). The interaction with CIART stretch occupies residues 514–594 (RIRGSSPSSC…IGIDMIDNDQ (81 aa)). A compositionally biased stretch (low complexity) spans 517-527 (GSSPSSCGSSP). An N6-acetyllysine modification is found at K544.

In terms of assembly, component of the circadian clock oscillator which includes the CRY1/2 proteins, CLOCK or NPAS2, BMAL1 or BMAL2, CSNK1D and/or CSNK1E, TIMELESS and the PER1/2/3 proteins. Forms a heterodimer with CLOCK. The CLOCK-BMAL1 heterodimer is required for E-box-dependent transactivation, for CLOCK nuclear translocation and degradation, and, for phosphorylation of both CLOCK and BMAL1. Part of a nuclear complex which also includes RACK1 and PRKCA; RACK1 and PRKCA are recruited to the complex in a circadian manner. Interacts with NPAS2. Interacts with EZH2. Interacts with SUMO3. Interacts with SIRT1. Interacts with AHR. Interacts with ID1, ID2 and ID3. Interacts with DDX4. Interacts with OGT. Interacts with EED and SUZ12. Interacts with MTA1. Interacts with CIART. Interacts with HSP90. Interacts with KAT2B and EP300. Interacts with BHLHE40/DEC1 and BHLHE41/DEC2. Interacts with RELB and the interaction is enhanced in the presence of CLOCK. Interacts with PER1, PER2, CRY1 and CRY2 and this interaction requires a translocation to the nucleus. Interaction of the CLOCK-BMAL1 heterodimer with PER or CRY inhibits transcription activation. Interaction of the CLOCK-BMAL1 with CRY1 is independent of DNA but with PER2 is off DNA. The CLOCK-BMAL1 heterodimer interacts with GSK3B. Interacts with KDM5A. Interacts with KMT2A; in a circadian manner. Interacts with UBE3A. Interacts with PRKCG. Interacts with MAGEL2. Interacts with NCOA2. Interacts with THRAP3. The CLOCK-BMAL1 heterodimer interacts with PASD1. Interacts with PASD1. Interacts with USP9X. Interacts with PIWIL2 (via PIWI domain). Interacts with HDAC3. Interacts with HNF4A. In terms of processing, ubiquitinated, leading to its proteasomal degradation. Deubiquitinated by USP9X. O-glycosylated; contains O-GlcNAc. O-glycosylation by OGT prevents protein degradation by inhibiting ubiquitination. It also stabilizes the CLOCK-BMAL1 heterodimer thereby increasing CLOCK-BMAL1-mediated transcription of genes in the negative loop of the circadian clock such as PER1/2/3 and CRY1/2. Post-translationally, acetylated on Lys-544 by CLOCK during the repression phase of the circadian cycle. Acetylation facilitates recruitment of CRY1 protein and initiates the repression phase of the circadian cycle. Acetylated at Lys-544 by KAT5 during the activation phase of the cycle, leading to recruitment of the positive transcription elongation factor b (P-TEFb) and BRD4, followed by productive elongation of circadian transcripts. Deacetylated by SIRT1, which may result in decreased protein stability. In terms of processing, phosphorylated upon dimerization with CLOCK. Phosphorylation enhances the transcriptional activity, alters the subcellular localization and decreases the stability of the CLOCK-BMAL1 heterodimer by promoting its degradation. Phosphorylation shows circadian variations in the liver with a peak between CT10 to CT14. Phosphorylation at Ser-97 by CK2 is essential for its nuclear localization, its interaction with CLOCK and controls CLOCK nuclear entry. Dephosphorylation at Ser-85 is important for dimerization with CLOCK and transcriptional activity. Sumoylated on Lys-266 upon dimerization with CLOCK. Predominantly conjugated to poly-SUMO2/3 rather than SUMO1 and the level of these conjugates undergo rhythmic variation, peaking at CT9-CT12. Sumoylation localizes it exclusively to the PML body and promotes its ubiquitination in the PML body, ubiquitin-dependent proteasomal degradation and the transcriptional activity of the CLOCK-BMAL1 heterodimer. Post-translationally, undergoes lysosome-mediated degradation in a time-dependent manner in the liver. In terms of tissue distribution, expressed in liver and testis (at protein level). Expressed in the suprachiasmatic nucleus (SCN) in a circadian manner.

The protein resides in the nucleus. It localises to the cytoplasm. Its subcellular location is the PML body. Its activity is regulated as follows. The redox state of the cell can modulate the transcriptional activity of the CLOCK-BMAL1 and NPAS2-BMAL1 heterodimers; NADH and NADPH enhance the DNA-binding activity of the heterodimers. Functionally, transcriptional activator which forms a core component of the circadian clock. The circadian clock, an internal time-keeping system, regulates various physiological processes through the generation of approximately 24 hour circadian rhythms in gene expression, which are translated into rhythms in metabolism and behavior. It is derived from the Latin roots 'circa' (about) and 'diem' (day) and acts as an important regulator of a wide array of physiological functions including metabolism, sleep, body temperature, blood pressure, endocrine, immune, cardiovascular, and renal function. Consists of two major components: the central clock, residing in the suprachiasmatic nucleus (SCN) of the brain, and the peripheral clocks that are present in nearly every tissue and organ system. Both the central and peripheral clocks can be reset by environmental cues, also known as Zeitgebers (German for 'timegivers'). The predominant Zeitgeber for the central clock is light, which is sensed by retina and signals directly to the SCN. The central clock entrains the peripheral clocks through neuronal and hormonal signals, body temperature and feeding-related cues, aligning all clocks with the external light/dark cycle. Circadian rhythms allow an organism to achieve temporal homeostasis with its environment at the molecular level by regulating gene expression to create a peak of protein expression once every 24 hours to control when a particular physiological process is most active with respect to the solar day. Transcription and translation of core clock components (CLOCK, NPAS2, BMAL1, BMAL2, PER1, PER2, PER3, CRY1 and CRY2) plays a critical role in rhythm generation, whereas delays imposed by post-translational modifications (PTMs) are important for determining the period (tau) of the rhythms (tau refers to the period of a rhythm and is the length, in time, of one complete cycle). A diurnal rhythm is synchronized with the day/night cycle, while the ultradian and infradian rhythms have a period shorter and longer than 24 hours, respectively. Disruptions in the circadian rhythms contribute to the pathology of cardiovascular diseases, cancer, metabolic syndromes and aging. A transcription/translation feedback loop (TTFL) forms the core of the molecular circadian clock mechanism. Transcription factors, CLOCK or NPAS2 and BMAL1 or BMAL2, form the positive limb of the feedback loop, act in the form of a heterodimer and activate the transcription of core clock genes and clock-controlled genes (involved in key metabolic processes), harboring E-box elements (5'-CACGTG-3') within their promoters. The core clock genes: PER1/2/3 and CRY1/2 which are transcriptional repressors form the negative limb of the feedback loop and interact with the CLOCK|NPAS2-BMAL1|BMAL2 heterodimer inhibiting its activity and thereby negatively regulating their own expression. This heterodimer also activates nuclear receptors NR1D1/2 and RORA/B/G, which form a second feedback loop and which activate and repress BMAL1 transcription, respectively. BMAL1 positively regulates myogenesis and negatively regulates adipogenesis via the transcriptional control of the genes of the canonical Wnt signaling pathway. Plays a role in normal pancreatic beta-cell function; regulates glucose-stimulated insulin secretion via the regulation of antioxidant genes NFE2L2/NRF2 and its targets SESN2, PRDX3, CCLC and CCLM. Negatively regulates the mTORC1 signaling pathway; regulates the expression of MTOR and DEPTOR. Controls diurnal oscillations of Ly6C inflammatory monocytes; rhythmic recruitment of the PRC2 complex imparts diurnal variation to chemokine expression that is necessary to sustain Ly6C monocyte rhythms. Regulates the expression of HSD3B2, STAR, PTGS2, CYP11A1, CYP19A1 and LHCGR in the ovary and also the genes involved in hair growth. Plays an important role in adult hippocampal neurogenesis by regulating the timely entry of neural stem/progenitor cells (NSPCs) into the cell cycle and the number of cell divisions that take place prior to cell-cycle exit. Regulates the circadian expression of CIART and KLF11. The CLOCK-BMAL1 heterodimer regulates the circadian expression of SERPINE1/PAI1, VWF, B3, CCRN4L/NOC, NAMPT, DBP, MYOD1, PPARGC1A, PPARGC1B, SIRT1, GYS2, F7, NGFR, GNRHR, BHLHE40/DEC1, ATF4, MTA1, KLF10 and also genes implicated in glucose and lipid metabolism. Promotes rhythmic chromatin opening, regulating the DNA accessibility of other transcription factors. May play a role in spermatogenesis; contributes to the chromatoid body assembly and physiology. The NPAS2-BMAL1 heterodimer positively regulates the expression of MAOA, F7 and LDHA and modulates the circadian rhythm of daytime contrast sensitivity by regulating the rhythmic expression of adenylate cyclase type 1 (ADCY1) in the retina. The preferred binding motif for the CLOCK-BMAL1 heterodimer is 5'-CACGTGA-3', which contains a flanking adenine nucleotide at the 3-prime end of the canonical 6-nucleotide E-box sequence. CLOCK specifically binds to the half-site 5'-CAC-3', while BMAL1 binds to the half-site 5'-GTGA-3'. The CLOCK-BMAL1 heterodimer also recognizes the non-canonical E-box motifs 5'-AACGTGA-3' and 5'-CATGTGA-3'. Essential for the rhythmic interaction of CLOCK with ASS1 and plays a critical role in positively regulating CLOCK-mediated acetylation of ASS1. Plays a role in protecting against lethal sepsis by limiting the expression of immune checkpoint protein CD274 in macrophages in a PKM2-dependent manner. Regulates the diurnal rhythms of skeletal muscle metabolism via transcriptional activation of genes promoting triglyceride synthesis (DGAT2) and metabolic efficiency (COQ10B). This Mus musculus (Mouse) protein is Basic helix-loop-helix ARNT-like protein 1 (Bmal1).